We begin with the raw amino-acid sequence, 335 residues long: NADH-quinone oxidoreductase subunit H (335 aa).

A run of 8 helical transmembrane segments spans residues 12–32 (IIAV…GALL), 81–101 (VIFT…FAVI), 114–134 (IGLL…LFAG), 154–174 (VSYE…VGSF), 187–207 (LWFI…GVAV), 238–258 (FFVG…TLFF), 270–290 (SLAF…FILL), and 307–327 (WKFC…IVLL).

Belongs to the complex I subunit 1 family. In terms of assembly, NDH-1 is composed of 13 different subunits. Subunits NuoA, H, J, K, L, M, N constitute the membrane sector of the complex.

The protein resides in the cell inner membrane. It catalyses the reaction a quinone + NADH + 5 H(+)(in) = a quinol + NAD(+) + 4 H(+)(out). Its function is as follows. NDH-1 shuttles electrons from NADH, via FMN and iron-sulfur (Fe-S) centers, to quinones in the respiratory chain. The immediate electron acceptor for the enzyme in this species is believed to be ubiquinone. Couples the redox reaction to proton translocation (for every two electrons transferred, four hydrogen ions are translocated across the cytoplasmic membrane), and thus conserves the redox energy in a proton gradient. This subunit may bind ubiquinone. This Pseudomonas syringae pv. syringae (strain B728a) protein is NADH-quinone oxidoreductase subunit H.